Here is a 208-residue protein sequence, read N- to C-terminus: Ubiquitin-conjugating enzyme E2 S (208 aa).

Residues 14 to 160 (QTIRQVMKEL…ARMMTEIHAQ (147 aa)) enclose the UBC core domain. Cysteine 98 (glycyl thioester intermediate) is an active-site residue. The disordered stretch occupies residues 161-193 (PAKCGAGASDAKDDDGPSTKKHAGLDKKLQDKK). The segment covering 170–193 (DAKDDDGPSTKKHAGLDKKLQDKK) has biased composition (basic and acidic residues).

It belongs to the ubiquitin-conjugating enzyme family.

The catalysed reaction is S-ubiquitinyl-[E1 ubiquitin-activating enzyme]-L-cysteine + [E2 ubiquitin-conjugating enzyme]-L-cysteine = [E1 ubiquitin-activating enzyme]-L-cysteine + S-ubiquitinyl-[E2 ubiquitin-conjugating enzyme]-L-cysteine.. It functions in the pathway protein modification; protein ubiquitination. Its function is as follows. Catalyzes the covalent attachment of ubiquitin to other proteins. Acts as an essential factor of the anaphase promoting complex/cyclosome (APC/C), a cell cycle-regulated ubiquitin ligase that controls progression through mitosis. Acts by specifically elongating polyubiquitin chains initiated by the E2 enzyme vih/UbcH10 on APC/C substrates, enhancing the degradation of APC/C substrates by the proteasome and promoting mitotic exit. The chain is Ubiquitin-conjugating enzyme E2 S from Drosophila virilis (Fruit fly).